A 490-amino-acid chain; its full sequence is Tandem C2 domains nuclear protein (490 aa).

5 positions are modified to phosphoserine: S83, S156, S168, S174, and S211. Residues 189–215 form a disordered region; the sequence is HDSLSSVPSSSSSRKNSQGSNRSLDTI. The span at 192–211 shows a compositional bias: low complexity; it reads LSSVPSSSSSRKNSQGSNRS. 2 positions are modified to phosphothreonine: T214 and T216. S218 is subject to Phosphoserine. C2 domains are found at residues 223–342 and 344–471; these read DFGR…SLDI and PPSK…NQWK. The Nuclear localization signal motif lies at 447–449; that stretch reads RRK.

It localises to the nucleus. The chain is Tandem C2 domains nuclear protein (TC2N) from Homo sapiens (Human).